Consider the following 485-residue polypeptide: MELWKKSLKELSDLVKSKEVKPSEIVEAFIERKNQVEPKIKAYVTALDDLALEKAKKRDQELTKLENIPDLFGLPIAIKDNISTKDIKTTCSSKMLENFVPVYDATVIERLKSQGYVITGKTNLDEFAMGSSTENSAFFPTRNPWDLERVPGGSSGGSAAVVASGMAPASLGSDTGGSIRQPAAFCGVVGLKPTYGRVSRYGLVAFASSLDQIGPFGRTVEDVAMIMNVISGKDPKDSTSRSIPVPNYLESLNKDVKGLKIGLPKEFYTEDLNPQIKEIILNAVKQLEKEGMTAHEISLPYTKYAIETYYIIAPSEASSNLARFDGVRYGYRAKEYKNLEEMYSKTRDEGFGAEVKRRIMIGTYALSSGYYDAYYLKAQKVRTLIYQDYMNAFEKVDVIITPTTPDVAFKIGEKSNDPIQMYLSDIFTVSANMATVPALSIPCGFKDNLPVGMQIIGKPFDEETILQVAYKFQSLNDYHKRFPEV.

Catalysis depends on charge relay system residues lysine 79 and serine 154. Residue serine 178 is the Acyl-ester intermediate of the active site.

This sequence belongs to the amidase family. GatA subfamily. Heterotrimer of A, B and C subunits.

The catalysed reaction is L-glutamyl-tRNA(Gln) + L-glutamine + ATP + H2O = L-glutaminyl-tRNA(Gln) + L-glutamate + ADP + phosphate + H(+). Functionally, allows the formation of correctly charged Gln-tRNA(Gln) through the transamidation of misacylated Glu-tRNA(Gln) in organisms which lack glutaminyl-tRNA synthetase. The reaction takes place in the presence of glutamine and ATP through an activated gamma-phospho-Glu-tRNA(Gln). The protein is Glutamyl-tRNA(Gln) amidotransferase subunit A of Sulfurihydrogenibium sp. (strain YO3AOP1).